The sequence spans 478 residues: Membrane-bound lytic murein transglycosylase F (478 aa).

The N-terminal stretch at 1–29 is a signal peptide; the sequence is MFPDSSYLFSMRSLSRFLIAIFGCGALLA. The non-LT domain stretch occupies residues 30–269; sequence SCDSFERSVL…RLLDRYYGHI (240 aa). Positions 271–478 are LT domain; that stretch reads RLHHTDVNGI…RKEDDSWQEF (208 aa). The active site involves glutamate 316.

In the N-terminal section; belongs to the bacterial solute-binding protein 3 family. This sequence in the C-terminal section; belongs to the transglycosylase Slt family.

The protein resides in the cell outer membrane. It catalyses the reaction Exolytic cleavage of the (1-&gt;4)-beta-glycosidic linkage between N-acetylmuramic acid (MurNAc) and N-acetylglucosamine (GlcNAc) residues in peptidoglycan, from either the reducing or the non-reducing ends of the peptidoglycan chains, with concomitant formation of a 1,6-anhydrobond in the MurNAc residue.. Functionally, murein-degrading enzyme that degrades murein glycan strands and insoluble, high-molecular weight murein sacculi, with the concomitant formation of a 1,6-anhydromuramoyl product. Lytic transglycosylases (LTs) play an integral role in the metabolism of the peptidoglycan (PG) sacculus. Their lytic action creates space within the PG sacculus to allow for its expansion as well as for the insertion of various structures such as secretion systems and flagella. In Nitrosospira multiformis (strain ATCC 25196 / NCIMB 11849 / C 71), this protein is Membrane-bound lytic murein transglycosylase F.